Reading from the N-terminus, the 255-residue chain is uncharacterized protein (255 aa).

Positions 1–10 (MSDSIHRRKV) are enriched in basic residues. The tract at residues 1–78 (MSDSIHRRKV…SPMRGLPMEE (78 aa)) is disordered. Residues 44-61 (VFERSFSEPSLNRHRDGQ) show a composition bias toward basic and acidic residues.

This is an uncharacterized protein from Arabidopsis thaliana (Mouse-ear cress).